Consider the following 511-residue polypeptide: 2-isopropylmalate synthase (511 aa).

One can recognise a Pyruvate carboxyltransferase domain in the interval 5-267 (LFIFDTTLRD…DTRIDATQIV (263 aa)). Mn(2+) is bound by residues Asp14, His202, His204, and Asn238. The interval 393–511 (KLLSMKVCSE…SKRERAHPQV (119 aa)) is regulatory domain.

It belongs to the alpha-IPM synthase/homocitrate synthase family. LeuA type 1 subfamily. As to quaternary structure, homodimer. It depends on Mn(2+) as a cofactor.

It localises to the cytoplasm. It carries out the reaction 3-methyl-2-oxobutanoate + acetyl-CoA + H2O = (2S)-2-isopropylmalate + CoA + H(+). Its pathway is amino-acid biosynthesis; L-leucine biosynthesis; L-leucine from 3-methyl-2-oxobutanoate: step 1/4. Functionally, catalyzes the condensation of the acetyl group of acetyl-CoA with 3-methyl-2-oxobutanoate (2-ketoisovalerate) to form 3-carboxy-3-hydroxy-4-methylpentanoate (2-isopropylmalate). The chain is 2-isopropylmalate synthase from Thiobacillus denitrificans (strain ATCC 25259 / T1).